The primary structure comprises 118 residues: Large ribosomal subunit protein bL19 (118 aa).

Belongs to the bacterial ribosomal protein bL19 family.

In terms of biological role, this protein is located at the 30S-50S ribosomal subunit interface and may play a role in the structure and function of the aminoacyl-tRNA binding site. This Parafrankia sp. (strain EAN1pec) protein is Large ribosomal subunit protein bL19.